Reading from the N-terminus, the 185-residue chain is dCTP deaminase (185 aa).

DCTP is bound by residues 107-112, 131-133, glutamine 152, tyrosine 166, and glutamine 176; these read KSTYAR and TLE. Glutamate 133 (proton donor/acceptor) is an active-site residue.

This sequence belongs to the dCTP deaminase family. In terms of assembly, homotrimer.

The catalysed reaction is dCTP + H2O + H(+) = dUTP + NH4(+). The protein operates within pyrimidine metabolism; dUMP biosynthesis; dUMP from dCTP (dUTP route): step 1/2. In terms of biological role, catalyzes the deamination of dCTP to dUTP. The sequence is that of dCTP deaminase from Anaplasma marginale (strain Florida).